A 769-amino-acid chain; its full sequence is Serine protease HtrA-like (769 aa).

Residues 1–20 show a composition bias toward basic residues; it reads MDIGKKHVIPKSQYRRKRRE. Positions 1–388 are disordered; that stretch reads MDIGKKHVIP…KKATSKLNKG (388 aa). 3 stretches are compositionally biased toward basic and acidic residues: residues 21–64, 71–87, and 96–108; these read FFHN…ERFK, LEQR…EESK, and YNKD…DVSK. Over residues 126–139 the composition is skewed to polar residues; it reads YEQNTEATLSTNST. Residues 140–186 show a composition bias toward basic and acidic residues; sequence DKVESTDMRKLSSDKNKVGHEEQHVLSKPSEHDKETRIDFESSRTDS. Over residues 247-262 the composition is skewed to polar residues; that stretch reads QQSQNEQTKTYTYGDS. 2 stretches are compositionally biased toward basic and acidic residues: residues 264–296 and 310–330; these read QNDK…HIVD and KIDD…HKQN. Over residues 331 to 347 the composition is skewed to polar residues; that stretch reads ADSSETVGYQSQSSASH. Over residues 348–364 the composition is skewed to basic and acidic residues; it reads RSTEKRNMAINDHDKLN. Over residues 366 to 388 the composition is skewed to polar residues; the sequence is QKPNTKTSANNNQKKATSKLNKG. Residues 410 to 430 traverse the membrane as a helical segment; sequence LVILMGIIILIVILNAIFNNV. Catalysis depends on charge relay system residues His-504, Asp-534, and Ser-619. Residues 680 to 733 form the PDZ domain; that stretch reads IASLNSFERQAVKLLGKVKNGVVVDQVDNNGLADQSGLKKGDVITELDGKLLED.

This sequence belongs to the peptidase S1C family.

The protein resides in the cell membrane. The protein is Serine protease HtrA-like of Staphylococcus aureus (strain MRSA252).